A 142-amino-acid chain; its full sequence is Galactose-6-phosphate isomerase subunit LacA (142 aa).

This sequence belongs to the LacAB/RpiB family. Heteromultimeric protein consisting of LacA and LacB.

It catalyses the reaction aldehydo-D-galactose 6-phosphate = keto-D-tagatose 6-phosphate. The protein operates within carbohydrate metabolism; D-galactose 6-phosphate degradation; D-tagatose 6-phosphate from D-galactose 6-phosphate: step 1/1. The sequence is that of Galactose-6-phosphate isomerase subunit LacA from Staphylococcus haemolyticus (strain JCSC1435).